A 1096-amino-acid chain; its full sequence is uncharacterized protein (1096 aa).

The protein belongs to the IIV-6 261R/396L/443R family.

This is an uncharacterized protein from Invertebrate iridescent virus 3 (IIV-3).